Here is a 110-residue protein sequence, read N- to C-terminus: Protein RnfH (110 aa).

Residues 90-110 are disordered; it reads VDKTRREGSIEGRKWLPKDSR.

It belongs to the UPF0125 (RnfH) family.

This is Protein RnfH from Burkholderia mallei (strain NCTC 10229).